The primary structure comprises 225 residues: MAGHDSGNARRGRASFGAFVRKPVERDSVANAGQAAEPGSPEATQAWPDDAVEVGAVVDAYGLKGWVKVATHADAGRGGDALLNARRWWLERGAERLSVRIMQSKTHSDTVVAQPAGVSDRDAALSMRGFRVFVRREDFPALAADEFYWVDLIGLEVVNEQSVALGKVSGMIDNGVHSIMRVEYPATGKDGQPTTDERLIPFVGVYVKTVDQAARRIVVDWEADY.

The PRC barrel domain occupies 144–225 (ADEFYWVDLI…RIVVDWEADY (82 aa)).

It belongs to the RimM family. In terms of assembly, binds ribosomal protein uS19.

Its subcellular location is the cytoplasm. Functionally, an accessory protein needed during the final step in the assembly of 30S ribosomal subunit, possibly for assembly of the head region. Essential for efficient processing of 16S rRNA. May be needed both before and after RbfA during the maturation of 16S rRNA. It has affinity for free ribosomal 30S subunits but not for 70S ribosomes. This Burkholderia orbicola (strain MC0-3) protein is Ribosome maturation factor RimM.